The following is a 361-amino-acid chain: Chorismate synthase (361 aa).

2 residues coordinate NADP(+): R48 and R54. FMN is bound by residues 125–127 (RSS), 238–239 (NA), G278, 293–297 (KPTSS), and R319.

Belongs to the chorismate synthase family. Homotetramer. Requires FMNH2 as cofactor.

It carries out the reaction 5-O-(1-carboxyvinyl)-3-phosphoshikimate = chorismate + phosphate. Its pathway is metabolic intermediate biosynthesis; chorismate biosynthesis; chorismate from D-erythrose 4-phosphate and phosphoenolpyruvate: step 7/7. Its function is as follows. Catalyzes the anti-1,4-elimination of the C-3 phosphate and the C-6 proR hydrogen from 5-enolpyruvylshikimate-3-phosphate (EPSP) to yield chorismate, which is the branch point compound that serves as the starting substrate for the three terminal pathways of aromatic amino acid biosynthesis. This reaction introduces a second double bond into the aromatic ring system. This is Chorismate synthase from Klebsiella pneumoniae (strain 342).